A 99-amino-acid chain; its full sequence is Nucleoid-associated protein str1598 (99 aa).

It belongs to the YbaB/EbfC family. Homodimer.

The protein localises to the cytoplasm. It localises to the nucleoid. Binds to DNA and alters its conformation. May be involved in regulation of gene expression, nucleoid organization and DNA protection. The chain is Nucleoid-associated protein str1598 from Streptococcus thermophilus (strain CNRZ 1066).